A 348-amino-acid polypeptide reads, in one-letter code: Heat-inducible transcription repressor HrcA (348 aa).

The protein belongs to the HrcA family.

Negative regulator of class I heat shock genes (grpE-dnaK-dnaJ and groELS operons). Prevents heat-shock induction of these operons. The protein is Heat-inducible transcription repressor HrcA of Chlorobium chlorochromatii (strain CaD3).